We begin with the raw amino-acid sequence, 711 residues long: Taperin (711 aa).

Disordered stretches follow at residues 134–305 (SRLL…APKP), 328–384 (RNSF…LGKS), and 414–438 (QRPSSPPPFLPAASEEAEPAEGLRV). Pro residues predominate over residues 157–180 (PPPPPPPPAPPRPPPAAPSPPAAP). The segment covering 197 to 206 (LQKTGSNSFT) has biased composition (polar residues). A Phosphoserine modification is found at serine 241. Residues 267-282 (TPSATPASPPASATPS) show a composition bias toward low complexity. Residues 283–296 (QRQCVSAATSTNDS) show a composition bias toward polar residues. Phosphoserine occurs at positions 362, 418, and 463. 4 disordered regions span residues 500 to 535 (TFTVVPKRKPGTLQDQHFSQANREPRPREAEEEEAS), 572 to 630 (SRKK…EKPF), 642 to 662 (SVRPESSRLPEGSSGLSSYTP), and 674 to 711 (QALEQAPREAEPPPVEAMLTPASQNDLSDFRSEPALYF). 2 stretches are compositionally biased toward polar residues: residues 512 to 521 (LQDQHFSQAN) and 581 to 590 (NDKSLQTTFE). Positions 597–624 (LEQEEEVDQQEEEEEEEEEEEEEEEGSG) are enriched in acidic residues.

This sequence belongs to the taperin family. As to quaternary structure, interacts with GRXCR2; the interaction restricts TPRN to the stereocilum basal region. Interacts with actin ACTB; the interaction may stabilize stereocilia. Interacts with CLIC5. Interacts with PTPRQ. TPRN, CLIC5 and PTPQR form concentric rings at the base of stereocilia and may form a complex. Interacts with phosphatase PPP1CA; the interaction results in inhibition of PPC1A phosphatase activity. Interacts with DNA damage response proteins XRCC6/KU70, XRCC5/KU80, PARP1, TOP1 and TOP2A; these interactions recruit TPRN to sites of DNA damage where it may play a role in DNA repair. As to expression, expression is detected in fetal cochlea.

The protein localises to the cell projection. It localises to the stereocilium. The protein resides in the microvillus. Its subcellular location is the nucleus. It is found in the nucleoplasm. The protein localises to the cytoplasm. Essential for hearing. Required for maintenance of stereocilia on both inner and outer hair cells. Necessary for the integrity of the stereociliary rootlet. May act as an actin cytoskeleton regulator involved in the regulation of actin dynamics at the pointed end in hair cells. Forms rings at the base of stereocilia and binds actin filaments in the stereocilia which may stabilize the stereocilia. Acts as a strong inhibitor of PPP1CA phosphatase activity. Recruited to sites of DNA damage and may play a role in DNA damage repair. The chain is Taperin (TPRN) from Homo sapiens (Human).